We begin with the raw amino-acid sequence, 533 residues long: CTP synthase (533 aa).

Residues 1–264 (MKYIFVTGGV…GKLVTEKLNL (264 aa)) are amidoligase domain. Residue Ser12 coordinates CTP. Ser12 provides a ligand contact to UTP. ATP is bound by residues 13-18 (SLGKGI) and Asp70. Residues Asp70 and Glu138 each coordinate Mg(2+). CTP contacts are provided by residues 145–147 (DIE), 185–190 (KTKPTQ), and Lys221. UTP-binding positions include 185–190 (KTKPTQ) and Lys221. 237-239 (KDA) contacts ATP. One can recognise a Glutamine amidotransferase type-1 domain in the interval 289–533 (TIGIVGKYIE…HGLVKASIEK (245 aa)). Gly357 contributes to the L-glutamine binding site. Cys384 acts as the Nucleophile; for glutamine hydrolysis in catalysis. Residues 385–388 (LGMQ), Glu407, and Arg464 each bind L-glutamine. Residues His509 and Glu511 contribute to the active site.

This sequence belongs to the CTP synthase family. As to quaternary structure, homotetramer.

The catalysed reaction is UTP + L-glutamine + ATP + H2O = CTP + L-glutamate + ADP + phosphate + 2 H(+). It carries out the reaction L-glutamine + H2O = L-glutamate + NH4(+). It catalyses the reaction UTP + NH4(+) + ATP = CTP + ADP + phosphate + 2 H(+). The protein operates within pyrimidine metabolism; CTP biosynthesis via de novo pathway; CTP from UDP: step 2/2. Its activity is regulated as follows. Allosterically activated by GTP, when glutamine is the substrate; GTP has no effect on the reaction when ammonia is the substrate. The allosteric effector GTP functions by stabilizing the protein conformation that binds the tetrahedral intermediate(s) formed during glutamine hydrolysis. Inhibited by the product CTP, via allosteric rather than competitive inhibition. In terms of biological role, catalyzes the ATP-dependent amination of UTP to CTP with either L-glutamine or ammonia as the source of nitrogen. Regulates intracellular CTP levels through interactions with the four ribonucleotide triphosphates. In Methanococcus maripaludis (strain DSM 14266 / JCM 13030 / NBRC 101832 / S2 / LL), this protein is CTP synthase.